Reading from the N-terminus, the 101-residue chain is Large ribosomal subunit protein eL36 (101 aa).

Disordered regions lie at residues 1–31 (MGEI…GFLS) and 75–101 (GTHM…SKGE).

Belongs to the eukaryotic ribosomal protein eL36 family.

This is Large ribosomal subunit protein eL36 (RL36) from Ulva compressa (Green alga).